Here is a 209-residue protein sequence, read N- to C-terminus: MPVAVMADNAFSFRKLLDQCENQELEAPGGIATPPVYGQLLALYLLQNDMNNARYLWKRIPPAIKSANSELGGIWSVGQRIWQRDFPGIYTTINAHQWSETVQPIMEALRDATRRRAFALVSQAYTSIIADDFAAFVGLPVEEAVKGVLEQGWQADSTTRMVLPRKPASGTLDVSLNRFIPLSEPAPVPPIPNEQQLARLTDYVAFLEN.

The 172-residue stretch at 8–179 (DNAFSFRKLL…GTLDVSLNRF (172 aa)) folds into the PCI domain. The residue at position 175 (S175) is a Phosphoserine.

It belongs to the CSN8 family. In terms of assembly, component of the CSN complex, composed of COPS1/GPS1, COPS2, COPS3, COPS4, COPS5, COPS6, COPS7 (COPS7A or COPS7B), COPS8 and COPS9. In the complex, it probably interacts directly with COPS3, COPS4 and COPS7 (COPS7A or COPS7B). Widely expressed.

The protein localises to the cytoplasm. It is found in the nucleus. Component of the COP9 signalosome complex (CSN), a complex involved in various cellular and developmental processes. The CSN complex is an essential regulator of the ubiquitin (Ubl) conjugation pathway by mediating the deneddylation of the cullin subunits of SCF-type E3 ligase complexes, leading to decrease the Ubl ligase activity of SCF-type complexes such as SCF, CSA or DDB2. The complex is also involved in phosphorylation of p53/TP53, c-jun/JUN, IkappaBalpha/NFKBIA, ITPK1 and IRF8/ICSBP, possibly via its association with CK2 and PKD kinases. CSN-dependent phosphorylation of TP53 and JUN promotes and protects degradation by the Ubl system, respectively. This chain is COP9 signalosome complex subunit 8 (Cops8), found in Mus musculus (Mouse).